A 97-amino-acid polypeptide reads, in one-letter code: Putative mitochondrial import inner membrane translocase subunit Tim8 A-B (97 aa).

The Twin CX3C motif signature appears at C43–C66. 2 disulfide bridges follow: C43–C66 and C47–C62.

The protein belongs to the small Tim family. As to quaternary structure, heterohexamer; possibly composed of 3 copies of TIMM8AB and 3 copies of TIMM13.

It is found in the mitochondrion inner membrane. Putative mitochondrial intermembrane chaperone that participates in the import and insertion of some multi-pass transmembrane proteins into the mitochondrial inner membrane. Also required for the transfer of beta-barrel precursors from the TOM complex to the sorting and assembly machinery (SAM complex) of the outer membrane. Acts as a chaperone-like protein that protects the hydrophobic precursors from aggregation and guide them through the mitochondrial intermembrane space. The sequence is that of Putative mitochondrial import inner membrane translocase subunit Tim8 A-B (Timm8a2) from Mus musculus (Mouse).